A 426-amino-acid polypeptide reads, in one-letter code: Serine--tRNA ligase (426 aa).

233–235 (TAE) contacts L-serine. An ATP-binding site is contributed by 264–266 (RSE). Glu-287 lines the L-serine pocket. Position 351–354 (351–354 (EISS)) interacts with ATP. Ser-387 lines the L-serine pocket.

It belongs to the class-II aminoacyl-tRNA synthetase family. Type-1 seryl-tRNA synthetase subfamily. As to quaternary structure, homodimer. The tRNA molecule binds across the dimer.

It localises to the cytoplasm. It carries out the reaction tRNA(Ser) + L-serine + ATP = L-seryl-tRNA(Ser) + AMP + diphosphate + H(+). It catalyses the reaction tRNA(Sec) + L-serine + ATP = L-seryl-tRNA(Sec) + AMP + diphosphate + H(+). It functions in the pathway aminoacyl-tRNA biosynthesis; selenocysteinyl-tRNA(Sec) biosynthesis; L-seryl-tRNA(Sec) from L-serine and tRNA(Sec): step 1/1. Functionally, catalyzes the attachment of serine to tRNA(Ser). Is also able to aminoacylate tRNA(Sec) with serine, to form the misacylated tRNA L-seryl-tRNA(Sec), which will be further converted into selenocysteinyl-tRNA(Sec). This chain is Serine--tRNA ligase, found in Pseudomonas putida (strain ATCC 700007 / DSM 6899 / JCM 31910 / BCRC 17059 / LMG 24140 / F1).